A 447-amino-acid chain; its full sequence is Phosphoglucosamine mutase (447 aa).

The Phosphoserine intermediate role is filled by Ser106. Mg(2+) is bound by residues Ser106, Asp245, Asp247, and Asp249. Ser106 is subject to Phosphoserine.

It belongs to the phosphohexose mutase family. Mg(2+) is required as a cofactor. Activated by phosphorylation.

It carries out the reaction alpha-D-glucosamine 1-phosphate = D-glucosamine 6-phosphate. Functionally, catalyzes the conversion of glucosamine-6-phosphate to glucosamine-1-phosphate. In Cupriavidus pinatubonensis (strain JMP 134 / LMG 1197) (Cupriavidus necator (strain JMP 134)), this protein is Phosphoglucosamine mutase.